A 216-amino-acid chain; its full sequence is Octanoyltransferase (216 aa).

Positions 32–211 (QEASEMLWFL…RFPYFLEALQ (180 aa)) constitute a BPL/LPL catalytic domain. Residues 71–78 (RGGRYTYH), 142–144 (AIG), and 155–157 (GFS) each bind substrate. Cys173 (acyl-thioester intermediate) is an active-site residue.

Belongs to the LipB family.

The protein localises to the cytoplasm. The enzyme catalyses octanoyl-[ACP] + L-lysyl-[protein] = N(6)-octanoyl-L-lysyl-[protein] + holo-[ACP] + H(+). Its pathway is protein modification; protein lipoylation via endogenous pathway; protein N(6)-(lipoyl)lysine from octanoyl-[acyl-carrier-protein]: step 1/2. Its function is as follows. Catalyzes the transfer of endogenously produced octanoic acid from octanoyl-acyl-carrier-protein onto the lipoyl domains of lipoate-dependent enzymes. Lipoyl-ACP can also act as a substrate although octanoyl-ACP is likely to be the physiological substrate. The chain is Octanoyltransferase from Zymomonas mobilis subsp. mobilis (strain ATCC 31821 / ZM4 / CP4).